A 340-amino-acid polypeptide reads, in one-letter code: UDP-N-acetylglucosamine--N-acetylmuramyl-(pentapeptide) pyrophosphoryl-undecaprenol N-acetylglucosamine transferase (340 aa).

Residues 10 to 12, Asn110, Ser171, and Gln272 each bind UDP-N-acetyl-alpha-D-glucosamine; that span reads TGG.

The protein belongs to the glycosyltransferase 28 family. MurG subfamily.

The protein resides in the cell membrane. It catalyses the reaction di-trans,octa-cis-undecaprenyl diphospho-N-acetyl-alpha-D-muramoyl-L-alanyl-D-glutamyl-meso-2,6-diaminopimeloyl-D-alanyl-D-alanine + UDP-N-acetyl-alpha-D-glucosamine = di-trans,octa-cis-undecaprenyl diphospho-[N-acetyl-alpha-D-glucosaminyl-(1-&gt;4)]-N-acetyl-alpha-D-muramoyl-L-alanyl-D-glutamyl-meso-2,6-diaminopimeloyl-D-alanyl-D-alanine + UDP + H(+). It participates in cell wall biogenesis; peptidoglycan biosynthesis. Its function is as follows. Cell wall formation. Catalyzes the transfer of a GlcNAc subunit on undecaprenyl-pyrophosphoryl-MurNAc-pentapeptide (lipid intermediate I) to form undecaprenyl-pyrophosphoryl-MurNAc-(pentapeptide)GlcNAc (lipid intermediate II). The polypeptide is UDP-N-acetylglucosamine--N-acetylmuramyl-(pentapeptide) pyrophosphoryl-undecaprenol N-acetylglucosamine transferase (Wolbachia pipientis subsp. Culex pipiens (strain wPip)).